A 237-amino-acid polypeptide reads, in one-letter code: Terpene cyclase spyD (237 aa).

The next 7 membrane-spanning stretches (helical) occupy residues 17–37, 47–67, 71–91, 109–129, 138–158, 167–187, and 206–226; these read IYNV…IVTV, AIPL…VLVY, YLLF…IVYG, HLPL…YALA, IHGG…CQLL, SWTM…GEFL, and WCTG…WYMG.

It belongs to the paxB family.

Its subcellular location is the membrane. It catalyses the reaction (S)-(2E,6E,10E)-epoxygeranylgeranyl-triacetate lactone = sartorypyrone F. The enzyme catalyses (S)-(2E,6E,10E)-epoxygeranylgeranyl-triacetate lactone = sartorypyrone D. The protein operates within secondary metabolite biosynthesis; terpenoid biosynthesis. Terpene cyclase; part of the gene cluster that mediates the biosynthesis of meroterpenoids called sartorypyrones. Within the pathway, spyD catalyzes the cyclization of epoxygeranylgeranyl-triacetate lactone. SpyD exhibits promiscuous activity, resulting in the formation of bicyclic sartorypyrone F and monocyclic sartorypyrone D. The biosynthesis of sartorypyrones begins with the production of triacetic acid lactone (TAL) by the NR-PKS spyA using one molecule of acetyl-CoA and two molecules of malonyl-CoA. The prenyltransferase spyF then conjugates geranylgeranyl pyrophosphate (GGPP) to TAL to form geranylgeranyl-triacetate lactone, for which the pathway-specific geranylgeranyl pyrophosphate synthase (GGPS) spyE is required to provide GGPP. Subsequently, geranylgeranyl-triacetate lactone is epoxidized at the terminal olein by the FAD-dependent monooxygenase spyC, followed by cyclization of the terpenoid component catalyzed by the terpene cyclase spyD to produce both the bicyclic sartorypyrone F and the monocyclic sartorypyrone D. Finally, the last step of the biosynthesis involves the acetylation of the meroterpenoids sartorypyrones D and F by the acetyltransferase SpyB to produce sartorypyrones A and G, respectively. This chain is Terpene cyclase spyD, found in Aspergillus fumigatus (strain ATCC MYA-4609 / CBS 101355 / FGSC A1100 / Af293) (Neosartorya fumigata).